Here is a 120-residue protein sequence, read N- to C-terminus: MRYYEIVLIIHPDSDNQIDNLVNYYSEIIINSTGKIHRLENWGRRQLAYAIKNLNKAYYLLLNIEISKNILDILDNDFRFNEIILRYLIMRTKNIIVDPSAMVKKKDDNNQEGNNSTVCI.

Belongs to the bacterial ribosomal protein bS6 family.

Its function is as follows. Binds together with bS18 to 16S ribosomal RNA. The protein is Small ribosomal subunit protein bS6 of Blochmanniella floridana.